The primary structure comprises 428 residues: Enolase (428 aa).

Position 163 (Gln-163) interacts with (2R)-2-phosphoglycerate. The active-site Proton donor is the Glu-205. The Mg(2+) site is built by Asp-243, Glu-286, and Asp-313. (2R)-2-phosphoglycerate-binding residues include Lys-338, Arg-367, Ser-368, and Lys-389. Lys-338 (proton acceptor) is an active-site residue.

The protein belongs to the enolase family. The cofactor is Mg(2+).

It is found in the cytoplasm. Its subcellular location is the secreted. The protein resides in the cell surface. The enzyme catalyses (2R)-2-phosphoglycerate = phosphoenolpyruvate + H2O. It functions in the pathway carbohydrate degradation; glycolysis; pyruvate from D-glyceraldehyde 3-phosphate: step 4/5. Catalyzes the reversible conversion of 2-phosphoglycerate (2-PG) into phosphoenolpyruvate (PEP). It is essential for the degradation of carbohydrates via glycolysis. This is Enolase from Polaromonas naphthalenivorans (strain CJ2).